Here is a 409-residue protein sequence, read N- to C-terminus: Probable ferredoxin reductase CtmF (409 aa).

FAD is bound by residues alanine 15, aspartate 37, lysine 50, valine 83, aspartate 279, and valine 298.

The protein belongs to the FAD-dependent oxidoreductase family. FAD is required as a cofactor.

It participates in terpene metabolism; monoterpene degradation. Its function is as follows. Involved in the degradation of the cyclic monoterpene limonene. Probably part of an electron transfer system involved in the oxidation of limonene to perillyl alcohol. In Castellaniella defragrans (strain DSM 12143 / CCUG 39792 / 65Phen) (Alcaligenes defragrans), this protein is Probable ferredoxin reductase CtmF.